We begin with the raw amino-acid sequence, 158 residues long: MQGHLSAWLVKHGLIHRSLGFDYQGIETLQIKPGDWHSIAVILYVYGYNYLRSQCAYDVAPGGLLASVYHLTRIEYGADQPEEVCIKVFAPRRDPRIPSVFWVWKSVDFQERESYDMLGISYDNHPRLKRILMPESWIGWPLRKDYIAPNFYEIQDAH.

The protein belongs to the complex I 30 kDa subunit family. NDH is composed of at least 16 different subunits, 5 of which are encoded in the nucleus.

It is found in the plastid. The protein resides in the chloroplast thylakoid membrane. It catalyses the reaction a plastoquinone + NADH + (n+1) H(+)(in) = a plastoquinol + NAD(+) + n H(+)(out). The enzyme catalyses a plastoquinone + NADPH + (n+1) H(+)(in) = a plastoquinol + NADP(+) + n H(+)(out). Its function is as follows. NDH shuttles electrons from NAD(P)H:plastoquinone, via FMN and iron-sulfur (Fe-S) centers, to quinones in the photosynthetic chain and possibly in a chloroplast respiratory chain. The immediate electron acceptor for the enzyme in this species is believed to be plastoquinone. Couples the redox reaction to proton translocation, and thus conserves the redox energy in a proton gradient. This chain is NAD(P)H-quinone oxidoreductase subunit J, chloroplastic, found in Lactuca sativa (Garden lettuce).